A 500-amino-acid chain; its full sequence is L-aspartate semialdehyde sulfurtransferase (500 aa).

Residue cysteine 131 is the Cysteine persulfide intermediate of the active site. CBS domains are found at residues 384 to 441 (MADF…IFDS) and 446 to 500 (MTKK…ARRY).

The protein belongs to the L-aspartate semialdehyde sulfurtransferase family. Forms homodimers. May form a complex with MA_1822.

The catalysed reaction is L-aspartate 4-semialdehyde + reduced 2[4Fe-4S]-[ferredoxin] + hydrogen sulfide + 3 H(+) = oxidized 2[4Fe-4S]-[ferredoxin] + L-homocysteine + H2O. It participates in amino-acid biosynthesis. Its function is as follows. Required for O-acetylhomoserine sulfhydrylase (OAHS)-independent homocysteine (Hcy) biosynthesis. Together with MA_1822, catalyzes the condensation of sulfide with aspartate semialdehyde to generate homocysteine. Likely functions through persulfide intermediate. The protein is L-aspartate semialdehyde sulfurtransferase of Methanosarcina acetivorans (strain ATCC 35395 / DSM 2834 / JCM 12185 / C2A).